The following is a 294-amino-acid chain: Glycine--tRNA ligase alpha subunit (294 aa).

It belongs to the class-II aminoacyl-tRNA synthetase family. In terms of assembly, tetramer of two alpha and two beta subunits.

The protein localises to the cytoplasm. It carries out the reaction tRNA(Gly) + glycine + ATP = glycyl-tRNA(Gly) + AMP + diphosphate. The sequence is that of Glycine--tRNA ligase alpha subunit from Trichodesmium erythraeum (strain IMS101).